The primary structure comprises 486 residues: RAC-beta serine/threonine-protein kinase A (486 aa).

Residues 5-110 (MVIKEGWLQK…WIIAIQTVAN (106 aa)) enclose the PH domain. Residues S133 and S136 are each glycosylated (O-linked (GlcNAc) serine). One can recognise a Protein kinase domain in the interval 157–414 (FDYLKLLGKG…AQEVMSHRFF (258 aa)). ATP-binding positions include 163–171 (LGKGTFGKV) and K186. Residue D280 is the Proton acceptor of the active site. The O-linked (GlcNAc) threonine glycan is linked to T311. T314 is subject to Phosphothreonine. T318 carries an O-linked (GlcNAc) threonine glycan. Positions 415-486 (VSINWQDVTE…QFSYSASIRE (72 aa)) constitute an AGC-kinase C-terminal domain. The segment at 455–486 (LTPPDRYDNLDALESDQRPHFPQFSYSASIRE) is disordered. A compositionally biased stretch (basic and acidic residues) spans 459–473 (DRYDNLDALESDQRP). Phosphoserine is present on S479. O-linked (GlcNAc) serine; alternate glycosylation is present at S479.

Belongs to the protein kinase superfamily. AGC Ser/Thr protein kinase family. RAC subfamily. Phosphorylation on Thr-314 and Ser-479 is required for full activity. Phosphorylation of the activation loop at Thr-314 by PDPK1/PDK1 is a prerequisite for full activation. Phosphorylation by mTORC2 at Ser-479 in response to growth factors plays a key role in AKT1 activation by facilitating subsequent phosphorylation of the activation loop by PDPK1/PDK1.

The catalysed reaction is L-seryl-[protein] + ATP = O-phospho-L-seryl-[protein] + ADP + H(+). The enzyme catalyses L-threonyl-[protein] + ATP = O-phospho-L-threonyl-[protein] + ADP + H(+). With respect to regulation, two specific sites, one in the kinase domain (Thr-314) and the other in the C-terminal regulatory region (Ser-479), need to be phosphorylated for its full activation. In terms of biological role, akt2-a is one of several closely related serine/threonine-protein kinases known as the AKT kinase, and which regulate many processes including metabolism, proliferation, cell survival, growth and angiogenesis. This is mediated through serine and/or threonine phosphorylation of a range of downstream substrates. Over 100 substrate candidates have been reported so far, but for most of them, no isoform specificity has been reported. May be involved in the inhibition of ciliogenesis. This Xenopus laevis (African clawed frog) protein is RAC-beta serine/threonine-protein kinase A (akt2-a).